The sequence spans 393 residues: Asparagine--oxo-acid transaminase (393 aa).

Residues Gly-39, Trp-126, and Asn-176 each contribute to the L-asparagine site. Lys-239 carries the N6-(pyridoxal phosphate)lysine modification. An L-asparagine-binding site is contributed by Arg-370.

This sequence belongs to the class-I pyridoxal-phosphate-dependent aminotransferase family. It depends on pyridoxal 5'-phosphate as a cofactor.

It catalyses the reaction a 2-oxocarboxylate + L-asparagine = 2-oxosuccinamate + an L-alpha-amino acid. The enzyme catalyses L-asparagine + 2-oxoglutarate = 2-oxosuccinamate + L-glutamate. Its function is as follows. Catalyzes the transamination reaction between L-asparagine and 2-oxoglutarate to produce L-glutamate and 2-oxosuccinamate. Is not active with pyruvate as amine acceptor. May also use other amino acids as substrates. This Streptococcus mutans serotype c (strain ATCC 700610 / UA159) protein is Asparagine--oxo-acid transaminase.